We begin with the raw amino-acid sequence, 603 residues long: Glutathione-regulated potassium-efflux system protein KefB (603 aa).

A run of 13 helical transmembrane segments spans residues 4 to 24 (SDFL…VPLA), 29 to 49 (IGAV…GLGF), 55 to 75 (EILH…GLEL), 87 to 107 (IFGV…GLLM), 115 to 135 (AAVV…LQLM), 152 to 172 (VLLF…LLAG), 177 to 197 (HFDW…LIGG), 207 to 227 (FIAA…LVLG), 230 to 250 (LFMD…GVLL), 268 to 288 (GLLL…GVLY), 291 to 311 (LLWV…VLYL), 324 to 344 (MQFA…FSTA), and 355 to 375 (MALL…PLLM). Residues 402–521 (KPQVIVVGFG…AGVTQFSRET (120 aa)) enclose the RCK N-terminal domain.

It belongs to the monovalent cation:proton antiporter 2 (CPA2) transporter (TC 2.A.37) family. KefB subfamily. In terms of assembly, interacts with the regulatory subunit KefG.

It localises to the cell inner membrane. Pore-forming subunit of a potassium efflux system that confers protection against electrophiles. Catalyzes K(+)/H(+) antiport. This chain is Glutathione-regulated potassium-efflux system protein KefB, found in Shigella boydii serotype 4 (strain Sb227).